A 456-amino-acid chain; its full sequence is tRNA modification GTPase MnmE (456 aa).

Residues Lys29, Glu87, and Arg126 each coordinate (6S)-5-formyl-5,6,7,8-tetrahydrofolate. The TrmE-type G domain maps to Gly222 to Asp380. Residue Asn232 participates in K(+) binding. GTP contacts are provided by residues Asn232–Ser237, Ser251–Thr257, and Asp276–Gly279. Ser236 provides a ligand contact to Mg(2+). Residues Ser251, Ile253, and Thr256 each contribute to the K(+) site. Thr257 serves as a coordination point for Mg(2+). A (6S)-5-formyl-5,6,7,8-tetrahydrofolate-binding site is contributed by Lys456.

The protein belongs to the TRAFAC class TrmE-Era-EngA-EngB-Septin-like GTPase superfamily. TrmE GTPase family. In terms of assembly, homodimer. Heterotetramer of two MnmE and two MnmG subunits. K(+) is required as a cofactor.

The protein resides in the cytoplasm. In terms of biological role, exhibits a very high intrinsic GTPase hydrolysis rate. Involved in the addition of a carboxymethylaminomethyl (cmnm) group at the wobble position (U34) of certain tRNAs, forming tRNA-cmnm(5)s(2)U34. The sequence is that of tRNA modification GTPase MnmE from Wolinella succinogenes (strain ATCC 29543 / DSM 1740 / CCUG 13145 / JCM 31913 / LMG 7466 / NCTC 11488 / FDC 602W) (Vibrio succinogenes).